The following is a 376-amino-acid chain: tRNA(Met) cytidine acetate ligase (376 aa).

ATP is bound by residues 7–20 (IAEYNPFHNGHYYQ), Gly-102, Asn-160, and Arg-181.

The protein belongs to the TmcAL family.

Its subcellular location is the cytoplasm. It catalyses the reaction cytidine(34) in elongator tRNA(Met) + acetate + ATP = N(4)-acetylcytidine(34) in elongator tRNA(Met) + AMP + diphosphate. Catalyzes the formation of N(4)-acetylcytidine (ac(4)C) at the wobble position of elongator tRNA(Met), using acetate and ATP as substrates. First activates an acetate ion to form acetyladenylate (Ac-AMP) and then transfers the acetyl group to tRNA to form ac(4)C34. In Exiguobacterium sp. (strain ATCC BAA-1283 / AT1b), this protein is tRNA(Met) cytidine acetate ligase.